The following is a 224-amino-acid chain: Glycerol-3-phosphate acyltransferase (224 aa).

Transmembrane regions (helical) follow at residues 3–23 (IFLS…IGSL), 54–74 (VFGY…VVFA), 90–112 (LYFY…PIYF), 127–147 (LISI…LLLF), 152–172 (VSLS…IPWM), and 183–203 (GFGQ…LIFW).

This sequence belongs to the PlsY family. As to quaternary structure, probably interacts with PlsX.

The protein resides in the cell membrane. It catalyses the reaction an acyl phosphate + sn-glycerol 3-phosphate = a 1-acyl-sn-glycero-3-phosphate + phosphate. The protein operates within lipid metabolism; phospholipid metabolism. Its function is as follows. Catalyzes the transfer of an acyl group from acyl-phosphate (acyl-PO(4)) to glycerol-3-phosphate (G3P) to form lysophosphatidic acid (LPA). This enzyme utilizes acyl-phosphate as fatty acyl donor, but not acyl-CoA or acyl-ACP. The protein is Glycerol-3-phosphate acyltransferase of Mycoplasmopsis synoviae (strain 53) (Mycoplasma synoviae).